Consider the following 542-residue polypeptide: Chaperonin GroEL 2 (542 aa).

Residues 30–33 (TLGP), Lys-51, 87–91 (DGTTT), Gly-415, and Asp-496 each bind ATP.

Belongs to the chaperonin (HSP60) family. In terms of assembly, forms a cylinder of 14 subunits composed of two heptameric rings stacked back-to-back. Interacts with the co-chaperonin GroES.

It localises to the cytoplasm. It carries out the reaction ATP + H2O + a folded polypeptide = ADP + phosphate + an unfolded polypeptide.. Together with its co-chaperonin GroES, plays an essential role in assisting protein folding. The GroEL-GroES system forms a nano-cage that allows encapsulation of the non-native substrate proteins and provides a physical environment optimized to promote and accelerate protein folding. This Azorhizobium caulinodans (strain ATCC 43989 / DSM 5975 / JCM 20966 / LMG 6465 / NBRC 14845 / NCIMB 13405 / ORS 571) protein is Chaperonin GroEL 2.